The sequence spans 322 residues: Elongation factor P--(R)-beta-lysine ligase (322 aa).

75–77 (SPE) is a substrate binding site. 99-101 (RNE) is a binding site for ATP. Tyr-117 serves as a coordination point for substrate. 241–242 (EL) contributes to the ATP binding site. Glu-248 lines the substrate pocket. Gly-297 contacts ATP.

Belongs to the class-II aminoacyl-tRNA synthetase family. EpmA subfamily. In terms of assembly, homodimer.

It catalyses the reaction D-beta-lysine + L-lysyl-[protein] + ATP = N(6)-((3R)-3,6-diaminohexanoyl)-L-lysyl-[protein] + AMP + diphosphate + H(+). Its function is as follows. With EpmB is involved in the beta-lysylation step of the post-translational modification of translation elongation factor P (EF-P). Catalyzes the ATP-dependent activation of (R)-beta-lysine produced by EpmB, forming a lysyl-adenylate, from which the beta-lysyl moiety is then transferred to the epsilon-amino group of a conserved specific lysine residue in EF-P. In Avibacterium paragallinarum (Haemophilus gallinarum), this protein is Elongation factor P--(R)-beta-lysine ligase.